A 187-amino-acid chain; its full sequence is Large ribosomal subunit protein bL12cx (187 aa).

The transit peptide at 1 to 54 directs the protein to the chloroplast; it reads MASTTLSIATTIRSSSPLTSASTHHFLSKPTAIEFPFRLSSSSSHRAINLRPIS.

This sequence belongs to the bacterial ribosomal protein bL12 family.

Its subcellular location is the plastid. It is found in the chloroplast. The polypeptide is Large ribosomal subunit protein bL12cx (RPL12C) (Arabidopsis thaliana (Mouse-ear cress)).